Here is a 338-residue protein sequence, read N- to C-terminus: Acyl-CoA-binding domain-containing protein 1 (338 aa).

Residues 11 to 31 form a helical; Signal-anchor membrane-spanning segment; that stretch reads IIFGLIFAYLLAKLISILLAF. Residues Asn-35 and Asn-41 are each glycosylated (N-linked (GlcNAc...) asparagine). Residues 69-89 form a disordered region; that stretch reads AEQGSLRGDEDESDDDDWEGV. A compositionally biased stretch (acidic residues) spans 77–89; the sequence is DEDESDDDDWEGV. The region spanning 94-184 is the ACB domain; sequence LDEAFSAATA…VTQLYPAWVE (91 aa). Residues 126–130, Lys-152, and Tyr-171 each bind an acyl-CoA; that span reads YGLYK. N-linked (GlcNAc...) asparagine glycosylation is present at Asn-191. ANK repeat units lie at residues 217–246, 250–279, 283–312, and 316–338; these read LKID…PVNA, EGRT…DVNA, EGQT…DTTI, and DGNS…KDSN.

The protein belongs to the ACBP family. In terms of assembly, interacts with RAP2-12. Binds to SMO1-1 and SMO1-2. In terms of processing, glycosylated. In seeds, localized in the outer integument. In terms of tissue distribution, expressed at low levels in roots, stems, leaves, flowers, and siliques, especially within seeds.

It is found in the cell membrane. The protein localises to the secreted. It localises to the cell wall. Its subcellular location is the endoplasmic reticulum membrane. Its function is as follows. Binds medium- and long-chain acyl-CoA esters with very high affinity. Can interact in vitro with arachidonyl-CoA, barely with oleoyl-CoA, but not with palmitoyl-CoA. Confers tolerance and binds to lead ions Pb(2+), probably by promoting lead translocation from roots to shoots. May function as an intracellular carrier of acyl-CoA esters. Modulates negatively sterol synthesis during embryogenesis and gametophytes development via interactions with SMO1-1 and SMO1-2; sterols serve as lipid modulators for gene expression of homeodomain-leucine zipper IV transcription factors. The chain is Acyl-CoA-binding domain-containing protein 1 from Arabidopsis thaliana (Mouse-ear cress).